Reading from the N-terminus, the 488-residue chain is Glutamate--tRNA ligase (488 aa).

The 'HIGH' region motif lies at 16-26; it reads PSPTGEPHVGT. The 'KMSKS' region motif lies at 257–261; it reads KLSKR. ATP is bound at residue lysine 260.

This sequence belongs to the class-I aminoacyl-tRNA synthetase family. Glutamate--tRNA ligase type 1 subfamily. Monomer.

The protein resides in the cytoplasm. The catalysed reaction is tRNA(Glu) + L-glutamate + ATP = L-glutamyl-tRNA(Glu) + AMP + diphosphate. Catalyzes the attachment of glutamate to tRNA(Glu) in a two-step reaction: glutamate is first activated by ATP to form Glu-AMP and then transferred to the acceptor end of tRNA(Glu). The protein is Glutamate--tRNA ligase of Rhizobium etli (strain ATCC 51251 / DSM 11541 / JCM 21823 / NBRC 15573 / CFN 42).